Reading from the N-terminus, the 164-residue chain is Phospholipase A and acyltransferase 4 (164 aa).

The tract at residues 1–40 (MASPHQEPKPGDLIEIFRLGYEHWALYIGDGYVIHLAPPS) is essential for its ability regulate keratinocyte differentiation. Residues 1-134 (MASPHQEPKP…SRCKQVEKAK (134 aa)) lie on the Cytoplasmic side of the membrane. Residues 13–129 (LIEIFRLGYE…LRYGKSRCKQ (117 aa)) form the LRAT domain. Residues histidine 23 and histidine 35 contribute to the active site. Catalysis depends on cysteine 113, which acts as the Acyl-thioester intermediate. The interaction with TGM1 stretch occupies residues 124 to 164 (KSRCKQVEKAKVEVGVATALGILVVAGCSFAIRRYQKKATA). A helical transmembrane segment spans residues 135–155 (VEVGVATALGILVVAGCSFAI). Over 156 to 164 (RRYQKKATA) the chain is Lumenal.

This sequence belongs to the H-rev107 family. As to quaternary structure, interacts with TGM1. As to expression, widely expressed.

The protein localises to the membrane. It carries out the reaction a 1,2-diacyl-sn-glycero-3-phosphocholine + H2O = a 1-acyl-sn-glycero-3-phosphocholine + a fatty acid + H(+). The catalysed reaction is a 1,2-diacyl-sn-glycero-3-phosphocholine + H2O = a 2-acyl-sn-glycero-3-phosphocholine + a fatty acid + H(+). The enzyme catalyses 1,2-dihexadecanoyl-sn-glycero-3-phosphocholine + H2O = 1-hexadecanoyl-sn-glycero-3-phosphocholine + hexadecanoate + H(+). It catalyses the reaction 1,2-dihexadecanoyl-sn-glycero-3-phosphocholine + H2O = 2-hexadecanoyl-sn-glycero-3-phosphocholine + hexadecanoate + H(+). It carries out the reaction 1-hexadecanoyl-2-(9Z-octadecenoyl)-sn-glycero-3-phosphocholine + H2O = 2-(9Z-octadecenoyl)-sn-glycero-3-phosphocholine + hexadecanoate + H(+). The catalysed reaction is 1-hexadecanoyl-2-(9Z-octadecenoyl)-sn-glycero-3-phosphocholine + H2O = 1-hexadecanoyl-sn-glycero-3-phosphocholine + (9Z)-octadecenoate + H(+). The enzyme catalyses 1-hexadecanoyl-2-(5Z,8Z,11Z,14Z-eicosatetraenoyl)-sn-glycero-3-phosphocholine + H2O = 2-(5Z,8Z,11Z,14Z)-eicosatetraenoyl-sn-glycero-3-phosphocholine + hexadecanoate + H(+). It catalyses the reaction 1-hexadecanoyl-2-(9Z,12Z-octadecadienoyl)-sn-glycero-3-phosphoethanolamine + H2O = 1-hexadecanoyl-sn-glycero-3-phosphoethanolamine + (9Z,12Z)-octadecadienoate + H(+). It carries out the reaction 1-hexadecanoyl-2-(9Z,12Z-octadecadienoyl)-sn-glycero-3-phosphoethanolamine + H2O = 2-(9Z,12Z)-octadecadienoyl-sn-glycero-3-phosphoethanolamine + hexadecanoate + H(+). The catalysed reaction is 1-hexadecanoyl-2-(5Z,8Z,11Z,14Z-eicosatetraenoyl)-sn-glycero-3-phosphoethanolamine + H2O = 2-(5Z,8Z,11Z,14Z)-eicosatetraenoyl-sn-glycero-3-phosphoethanolamine + hexadecanoate + H(+). The enzyme catalyses 1-hexanoyl-2-acyl-sn-glycero-3-phosphocholine + H2O = hexanoate + a 2-acyl-sn-glycero-3-phosphocholine + H(+). It catalyses the reaction 1,2-diheptadecanoyl-sn-glycero-3-phosphoethanolamine + 1-(9Z-octadecenoyl)-2-hexadecanoyl-sn-glycero-3-phosphocholine = 1,2-diheptadecanoyl-sn-glycero-3-phospho-N-hexadecanoyl-ethanolamine + 1-(9Z-octadecenoyl)-sn-glycero-3-phosphocholine + H(+). It carries out the reaction 1,2-diheptadecanoyl-sn-glycero-3-phosphoethanolamine + 1-(9Z-octadecenoyl)-2-hexadecanoyl-sn-glycero-3-phosphocholine = 1,2-diheptadecanoyl-sn-glycero-3-phospho-N-(9Z-octadecenoyl)-ethanolamine + 2-hexadecanoyl-sn-glycero-3-phosphocholine + H(+). Functionally, exhibits both phospholipase A1/2 and acyltransferase activities. Shows phospholipase A1 (PLA1) and A2 (PLA2), catalyzing the calcium-independent release of fatty acids from the sn-1 or sn-2 position of glycerophospholipids. For most substrates, PLA1 activity is much higher than PLA2 activity. Shows O-acyltransferase activity, catalyzing the transfer of a fatty acyl group from glycerophospholipid to the hydroxyl group of lysophospholipid. Shows N-acyltransferase activity, catalyzing the calcium-independent transfer of a fatty acyl group at the sn-1 position of phosphatidylcholine (PC) and other glycerophospholipids to the primary amine of phosphatidylethanolamine (PE), forming N-acylphosphatidylethanolamine (NAPE), which serves as precursor for N-acylethanolamines (NAEs). Promotes keratinocyte differentiation via activation of TGM1. The protein is Phospholipase A and acyltransferase 4 of Homo sapiens (Human).